The sequence spans 253 residues: Imidazole glycerol phosphate synthase subunit HisF (253 aa).

Catalysis depends on residues aspartate 11 and aspartate 130.

It belongs to the HisA/HisF family. In terms of assembly, heterodimer of HisH and HisF.

Its subcellular location is the cytoplasm. The enzyme catalyses 5-[(5-phospho-1-deoxy-D-ribulos-1-ylimino)methylamino]-1-(5-phospho-beta-D-ribosyl)imidazole-4-carboxamide + L-glutamine = D-erythro-1-(imidazol-4-yl)glycerol 3-phosphate + 5-amino-1-(5-phospho-beta-D-ribosyl)imidazole-4-carboxamide + L-glutamate + H(+). Its pathway is amino-acid biosynthesis; L-histidine biosynthesis; L-histidine from 5-phospho-alpha-D-ribose 1-diphosphate: step 5/9. Its function is as follows. IGPS catalyzes the conversion of PRFAR and glutamine to IGP, AICAR and glutamate. The HisF subunit catalyzes the cyclization activity that produces IGP and AICAR from PRFAR using the ammonia provided by the HisH subunit. This is Imidazole glycerol phosphate synthase subunit HisF from Geotalea daltonii (strain DSM 22248 / JCM 15807 / FRC-32) (Geobacter daltonii).